The sequence spans 178 residues: MGNSLLRENRRQQNTQEMPWNVRMQSPKQRTSRCWDHHIAEGCFCLPWKKILIFEKRQDSQNENERMSSTPIQDNVDQTYSEELCYTLINHRVLCTRPSGNSAEEYYENVPCKAERPRESLGGTETEYSLLHMPSTDPRHARSPEDEYELLMPHRISSHFLQQPRPLMAPSETQFSHL.

A Phosphoserine modification is found at Ser99. Tyr148 is modified (phosphotyrosine).

Interacts with ACTB and MYH2; the interaction with MYH2 is increased by IL6-induced phosphorylation. Interacts (via C-terminus) with ARHGEF11 (via DH domain). Interacts with ARHGEF12. Interacts with SYK; the interaction increases after B-cell receptor stimulation, resulting in enhanced SYK autophosphorylation and activity. Post-translationally, phosphorylation on tyrosine residues can be induced by IL6. Phosphorylation is mediated by LYN. In terms of processing, targeted by the ubiquitin E3 ligase subunit FBXO10 to mediate its ubiquitination and degradation. Expressed in diffuse large B-cell lymphoma (DLBCL) and several germinal center (GC)-like lymphoma cell lines (at protein level). Highly expressed in normal GC lymphocytes and GC-derived malignancies. Expressed in thymus and spleen.

The protein resides in the cytoplasm. Its subcellular location is the cell membrane. Involved in the negative regulation of lymphocyte motility. It mediates the migration-inhibitory effects of IL6. Serves as a positive regulator of the RhoA signaling pathway. Enhancement of RhoA activation results in inhibition of lymphocyte and lymphoma cell motility by activation of its downstream effector ROCK. Is a regulator of B-cell receptor signaling, that acts through SYK kinase activation. In Homo sapiens (Human), this protein is Germinal center-associated signaling and motility protein (GCSAM).